The following is a 38-amino-acid chain: Antifungal protein 5 (38 aa).

This sequence belongs to the plant LTP family.

Possesses potent antifungal activity against F.graminearum but not P.infestans. This Malva parviflora (Little mallow) protein is Antifungal protein 5.